The sequence spans 368 residues: 3-isopropylmalate dehydrogenase (368 aa).

Position 77–88 (77–88 (GPKWGTGAVRPE)) interacts with NAD(+). Residues arginine 95, arginine 105, arginine 134, and aspartate 226 each coordinate substrate. Mg(2+)-binding residues include aspartate 226, aspartate 251, and aspartate 255. 290-301 (GSAPDLPANKVN) is a binding site for NAD(+).

This sequence belongs to the isocitrate and isopropylmalate dehydrogenases family. In terms of assembly, homodimer. The cofactor is Mg(2+). Mn(2+) serves as cofactor.

It is found in the cytoplasm. The catalysed reaction is (2R,3S)-3-isopropylmalate + NAD(+) = 4-methyl-2-oxopentanoate + CO2 + NADH. It participates in amino-acid biosynthesis; L-leucine biosynthesis; L-leucine from 3-methyl-2-oxobutanoate: step 3/4. Its function is as follows. Catalyzes the oxidation of 3-carboxy-2-hydroxy-4-methylpentanoate (3-isopropylmalate) to 3-carboxy-4-methyl-2-oxopentanoate. The product decarboxylates to 4-methyl-2 oxopentanoate. This is 3-isopropylmalate dehydrogenase (LEU2) from Kodamaea ohmeri (Yeast).